The following is a 368-amino-acid chain: Ferrochelatase (368 aa).

Residues H209 and E290 each coordinate Fe cation. Positions 341 to 368 (ADLGGGREATGQAAERSRQRALALGAKQ) are disordered.

This sequence belongs to the ferrochelatase family.

It localises to the cytoplasm. It catalyses the reaction heme b + 2 H(+) = protoporphyrin IX + Fe(2+). It functions in the pathway porphyrin-containing compound metabolism; protoheme biosynthesis; protoheme from protoporphyrin-IX: step 1/1. In terms of biological role, catalyzes the ferrous insertion into protoporphyrin IX. In Nitrosococcus oceani (strain ATCC 19707 / BCRC 17464 / JCM 30415 / NCIMB 11848 / C-107), this protein is Ferrochelatase.